A 727-amino-acid polypeptide reads, in one-letter code: FACT complex subunit Ssrp1 (727 aa).

Disordered regions lie at residues 458-565 and 596-727; these read AEAR…AFML and ELKD…EGSD. 2 stretches are compositionally biased toward acidic residues: residues 464–479 and 487–508; these read EEED…ESTD and NESD…DDSD. A compositionally biased stretch (gly residues) spans 510-519; that stretch reads SGGGGDGGTD. Composition is skewed to basic and acidic residues over residues 529 to 555, 596 to 620, and 675 to 703; these read KKNE…DTGK, ELKD…EMRN, and DQEK…KSES. The segment at residues 556–622 is a DNA-binding region (HMG box); sequence PKRGTSAFML…RYQEEMRNYK (67 aa). Acidic residues predominate over residues 704-727; that stretch reads EGGDSDDASNASEDDDEEEDEGSD.

This sequence belongs to the SSRP1 family. In terms of assembly, component of the FACT complex, a stable heterodimer of dre4/spt16 and Ssrp.

It is found in the nucleus. Its subcellular location is the chromosome. The protein resides in the nucleolus. In terms of biological role, component of the FACT complex, a general chromatin factor that acts to reorganize nucleosomes. The FACT complex is involved in multiple processes that require DNA as a template such as mRNA elongation, DNA replication and DNA repair. During transcription elongation the FACT complex acts as a histone chaperone that both destabilizes and restores nucleosomal structure. It facilitates the passage of RNA polymerase II and transcription by promoting the dissociation of one histone H2A-H2B dimer from the nucleosome, then subsequently promotes the reestablishment of the nucleosome following the passage of RNA polymerase II. Binds specifically to single-stranded DNA and RNA with highest affinity for nucleotides G and U. The FACT complex is required for expression of Hox genes. In Drosophila pseudoobscura pseudoobscura (Fruit fly), this protein is FACT complex subunit Ssrp1 (Ssrp).